The primary structure comprises 396 residues: 8-amino-7-oxononanoate synthase (396 aa).

Arg-19 serves as a coordination point for substrate. 106–107 (GY) lines the pyridoxal 5'-phosphate pocket. His-131 is a substrate binding site. Pyridoxal 5'-phosphate is bound by residues Ser-176, His-204, and Thr-233. Lys-236 bears the N6-(pyridoxal phosphate)lysine mark. Thr-350 contributes to the substrate binding site.

It belongs to the class-II pyridoxal-phosphate-dependent aminotransferase family. BioF subfamily. Homodimer. Pyridoxal 5'-phosphate is required as a cofactor.

It catalyses the reaction 6-carboxyhexanoyl-[ACP] + L-alanine + H(+) = (8S)-8-amino-7-oxononanoate + holo-[ACP] + CO2. It participates in cofactor biosynthesis; biotin biosynthesis. Its function is as follows. Catalyzes the decarboxylative condensation of pimeloyl-[acyl-carrier protein] and L-alanine to produce 8-amino-7-oxononanoate (AON), [acyl-carrier protein], and carbon dioxide. The chain is 8-amino-7-oxononanoate synthase from Pseudomonas syringae pv. tomato (strain ATCC BAA-871 / DC3000).